A 502-amino-acid polypeptide reads, in one-letter code: Glycerol kinase (502 aa).

Thr14 is an ADP binding site. ATP is bound by residues Thr14, Thr15, and Ser16. Thr14 contacts sn-glycerol 3-phosphate. Arg18 contacts ADP. Sn-glycerol 3-phosphate is bound by residues Arg84, Glu85, Tyr136, and Asp246. 5 residues coordinate glycerol: Arg84, Glu85, Tyr136, Asp246, and Gln247. Residues Thr268 and Gly311 each coordinate ADP. Positions 268, 311, 315, and 412 each coordinate ATP. Gly412 and Asn416 together coordinate ADP.

This sequence belongs to the FGGY kinase family.

It catalyses the reaction glycerol + ATP = sn-glycerol 3-phosphate + ADP + H(+). It participates in polyol metabolism; glycerol degradation via glycerol kinase pathway; sn-glycerol 3-phosphate from glycerol: step 1/1. Its activity is regulated as follows. Inhibited by fructose 1,6-bisphosphate (FBP). Functionally, key enzyme in the regulation of glycerol uptake and metabolism. Catalyzes the phosphorylation of glycerol to yield sn-glycerol 3-phosphate. The protein is Glycerol kinase of Pasteurella multocida (strain Pm70).